The chain runs to 509 residues: tRNA-2-methylthio-N(6)-dimethylallyladenosine synthase (509 aa).

Polar residues predominate over residues 1–15 (MNEQQRLASQQANSS). Residues 1-25 (MNEQQRLASQQANSSTKKEEKDYSK) form a disordered region. The span at 16 to 25 (TKKEEKDYSK) shows a compositional bias: basic and acidic residues. An MTTase N-terminal domain is found at 66–184 (RKFYIRTYGC…LPYILKDAMF (119 aa)). The [4Fe-4S] cluster site is built by C75, C111, C145, C221, C225, and C228. One can recognise a Radical SAM core domain in the interval 207 to 437 (RRGDIKAWVN…NTLVNTLAIE (231 aa)). The TRAM domain maps to 440–503 (SRYKGQIVEV…TWSLNGELVE (64 aa)).

The protein belongs to the methylthiotransferase family. MiaB subfamily. As to quaternary structure, monomer. [4Fe-4S] cluster is required as a cofactor.

It is found in the cytoplasm. It carries out the reaction N(6)-dimethylallyladenosine(37) in tRNA + (sulfur carrier)-SH + AH2 + 2 S-adenosyl-L-methionine = 2-methylsulfanyl-N(6)-dimethylallyladenosine(37) in tRNA + (sulfur carrier)-H + 5'-deoxyadenosine + L-methionine + A + S-adenosyl-L-homocysteine + 2 H(+). Catalyzes the methylthiolation of N6-(dimethylallyl)adenosine (i(6)A), leading to the formation of 2-methylthio-N6-(dimethylallyl)adenosine (ms(2)i(6)A) at position 37 in tRNAs that read codons beginning with uridine. The protein is tRNA-2-methylthio-N(6)-dimethylallyladenosine synthase of Bacillus cereus (strain B4264).